The sequence spans 487 residues: Malonate-semialdehyde dehydrogenase 2 (487 aa).

NAD(+) contacts are provided by Phe154, Lys178, Glu181, Arg182, and Ser231. Residue Cys286 is the Nucleophile of the active site. Glu386 provides a ligand contact to NAD(+).

This sequence belongs to the aldehyde dehydrogenase family. IolA subfamily. In terms of assembly, homotetramer.

It catalyses the reaction 3-oxopropanoate + NAD(+) + CoA + H2O = hydrogencarbonate + acetyl-CoA + NADH + H(+). The enzyme catalyses 2-methyl-3-oxopropanoate + NAD(+) + CoA + H2O = propanoyl-CoA + hydrogencarbonate + NADH + H(+). The protein operates within polyol metabolism; myo-inositol degradation into acetyl-CoA; acetyl-CoA from myo-inositol: step 7/7. In terms of biological role, catalyzes the oxidation of malonate semialdehyde (MSA) and methylmalonate semialdehyde (MMSA) into acetyl-CoA and propanoyl-CoA, respectively. Is involved in a myo-inositol catabolic pathway. Bicarbonate, and not CO2, is the end-product of the enzymatic reaction. The protein is Malonate-semialdehyde dehydrogenase 2 of Bacillus anthracis.